We begin with the raw amino-acid sequence, 412 residues long: MNWKDKVKTTFYSCDRFVRFVIQHFIQDDCTYIASALAFTSLLAVVPLMSVGLAIFSSFPVFQGLAEPVQNFIFDNFVPATGKIVQSYLQQFTSQVSKLSIWGIVFLIFTALLVMFTIERAMNKIWRVSSSRHGVSAFLLYWAIISLAPVLLGLSLAASSYLFSMPILADHRAPYTILHYSPFFLSLIGFTFLYVVVPNCPVKIRHAFWGGLVAAILFESAKHAFAYYLIRYNTYALLYGAFATVPIFFIWVYWVWIITLLGAEISYAFSVHHQRRGGKSLDGFSHALLWLHQLWLAQQHGKGLSFNDLVDASKQPFAVDVDEMINALIYHELIHATADGHYMLSRDLSHVTLYDLTQLLPYRLPTHLELQYSKASLAEQWRAAFKRHNEELKKSLDINLEELFKKTGTVIK.

6 helical membrane passes run 36–56 (ALAF…LAIF), 99–119 (LSIW…FTIE), 137–157 (AFLL…LSLA), 177–197 (ILHY…YVVV), 210–230 (GGLV…YYLI), and 241–261 (AFAT…ITLL).

Belongs to the UPF0761 family.

The protein resides in the cell inner membrane. The protein is UPF0761 membrane protein lpg0643 of Legionella pneumophila subsp. pneumophila (strain Philadelphia 1 / ATCC 33152 / DSM 7513).